The primary structure comprises 500 residues: Hepatic triacylglycerol lipase (500 aa).

Residues 1–21 (MENPLCVSIFLFYCILIQSSA) form the signal peptide. Positions 23-44 (GQSLGPESFGRRSRAAETNKTP) are disordered. Asparagine 67 and asparagine 78 each carry an N-linked (GlcNAc...) asparagine glycan. The active-site Nucleophile is the serine 168. The active-site Charge relay system is aspartate 194. The segment at 254–277 (CHFLELYKHFAKHGLNAITRTVKC) is essential for determining substrate specificity. Histidine 279 (charge relay system) is an active-site residue. The 135-residue stretch at 353–487 (YHYQFKIRFI…HPAREKTFVR (135 aa)) folds into the PLAT domain. N-linked (GlcNAc...) asparagine glycans are attached at residues asparagine 363 and asparagine 398.

The protein belongs to the AB hydrolase superfamily. Lipase family. Homodimer.

Its subcellular location is the secreted. It catalyses the reaction a triacylglycerol + H2O = a diacylglycerol + a fatty acid + H(+). The enzyme catalyses a 1-acyl-sn-glycero-3-phosphocholine + H2O = sn-glycerol 3-phosphocholine + a fatty acid + H(+). It carries out the reaction a 1,2-diacyl-sn-glycero-3-phosphocholine + H2O = a 2-acyl-sn-glycero-3-phosphocholine + a fatty acid + H(+). The catalysed reaction is 1,2,3-tri-(9Z-octadecenoyl)-glycerol + H2O = di-(9Z)-octadecenoylglycerol + (9Z)-octadecenoate + H(+). It catalyses the reaction 1,2-di-(9Z-octadecenoyl)-sn-glycero-3-phosphocholine + H2O = (9Z-octadecenoyl)-sn-glycero-3-phosphocholine + (9Z)-octadecenoate + H(+). The enzyme catalyses 1,2,3-tributanoylglycerol + H2O = dibutanoylglycerol + butanoate + H(+). It carries out the reaction 1,2-dihexadecanoyl-sn-glycero-3-phosphocholine + H2O = hexadecanoyl-sn-glycero-3-phosphocholine + hexadecanoate + H(+). The catalysed reaction is 1,2-di-(9Z-octadecenoyl)-sn-glycerol + H2O = 2-(9Z-octadecenoyl)-glycerol + (9Z)-octadecenoate + H(+). It catalyses the reaction 1,2,3-tri-(9Z-octadecenoyl)-glycerol + H2O = 2,3-di-(9Z)-octadecenoyl-sn-glycerol + (9Z)-octadecenoate + H(+). The enzyme catalyses 1-(9Z-octadecenoyl)-sn-glycero-3-phospho-L-serine + H2O = sn-glycero-3-phospho-L-serine + (9Z)-octadecenoate + H(+). It carries out the reaction 1-hexadecanoyl-sn-glycero-3-phosphocholine + H2O = sn-glycerol 3-phosphocholine + hexadecanoate + H(+). The catalysed reaction is 1,3-di-(9Z-octadecenoyl)-glycerol + H2O = 3-(9Z-octadecenoyl)-sn-glycerol + (9Z)-octadecenoate + H(+). In terms of biological role, catalyzes the hydrolysis of triglycerides and phospholipids present in circulating plasma lipoproteins, including chylomicrons, intermediate density lipoproteins (IDL), low density lipoproteins (LDL) of large size and high density lipoproteins (HDL), releasing free fatty acids (FFA) and smaller lipoprotein particles. Also exhibits lysophospholipase activity. Can hydrolyze both neutral lipid and phospholipid substrates but shows a greater binding affinity for neutral lipid substrates than phospholipid substrates. In native LDL, preferentially hydrolyzes the phosphatidylcholine species containing polyunsaturated fatty acids at sn-2 position. This chain is Hepatic triacylglycerol lipase (LIPC), found in Bos taurus (Bovine).